The chain runs to 276 residues: Probable endonuclease 4 (276 aa).

Zn(2+) is bound by residues His-65, His-105, Glu-141, Asp-175, His-178, His-210, Asp-223, His-225, and Glu-255.

Belongs to the AP endonuclease 2 family. It depends on Zn(2+) as a cofactor.

It carries out the reaction Endonucleolytic cleavage to 5'-phosphooligonucleotide end-products.. Functionally, endonuclease IV plays a role in DNA repair. It cleaves phosphodiester bonds at apurinic or apyrimidinic (AP) sites, generating a 3'-hydroxyl group and a 5'-terminal sugar phosphate. This Symbiobacterium thermophilum (strain DSM 24528 / JCM 14929 / IAM 14863 / T) protein is Probable endonuclease 4.